Consider the following 151-residue polypeptide: Acidic phospholipase A2 3 (151 aa).

The signal sequence occupies residues 1-27 (MYPAHLLVLLAVCVSLLGAASIPARPL). Cystine bridges form between Cys38–Cys104, Cys54–Cys151, Cys56–Cys72, Cys71–Cys132, Cys78–Cys125, Cys88–Cys118, and Cys111–Cys123. The Ca(2+) site is built by Tyr55, Gly57, and Gly59. His75 is a catalytic residue. Residue Asp76 coordinates Ca(2+). The active site involves Asp126.

This sequence belongs to the phospholipase A2 family. Group I subfamily. D49 sub-subfamily. Requires Ca(2+) as cofactor. In terms of tissue distribution, expressed by the venom gland.

It is found in the secreted. It carries out the reaction a 1,2-diacyl-sn-glycero-3-phosphocholine + H2O = a 1-acyl-sn-glycero-3-phosphocholine + a fatty acid + H(+). Functionally, PLA2 catalyzes the calcium-dependent hydrolysis of the 2-acyl groups in 3-sn-phosphoglycerides. This chain is Acidic phospholipase A2 3, found in Tropidechis carinatus (Australian rough-scaled snake).